Here is a 156-residue protein sequence, read N- to C-terminus: Small ribosomal subunit protein uS7 (156 aa).

Belongs to the universal ribosomal protein uS7 family. As to quaternary structure, part of the 30S ribosomal subunit. Contacts proteins S9 and S11.

Functionally, one of the primary rRNA binding proteins, it binds directly to 16S rRNA where it nucleates assembly of the head domain of the 30S subunit. Is located at the subunit interface close to the decoding center, probably blocks exit of the E-site tRNA. This Beijerinckia indica subsp. indica (strain ATCC 9039 / DSM 1715 / NCIMB 8712) protein is Small ribosomal subunit protein uS7.